Consider the following 137-residue polypeptide: Sch210972 biosynthesis cluster protein E (137 aa).

Polar residues predominate over residues Met-1–Pro-12. Positions Met-1–Gly-137 are disordered. Residues Pro-15 to Thr-27 show a composition bias toward low complexity. The span at Gly-51–Arg-71 shows a compositional bias: polar residues. The segment covering Asp-94–Lys-109 has biased composition (basic and acidic residues).

Its pathway is secondary metabolite biosynthesis. In terms of biological role, part of the gene cluster that mediates the biosynthesis of the tetramic acid Sch210972, a potential anti-HIV fungal natural product that contains a decalin core. The PKS module of cghG together with the enoylreductase cghC catalyze the formation of the polyketide unit which is then conjugated to 4-hydroxyl-4-methyl glutamate (HMG) by the condensation domain of the cghG NRPS module. One unique structural feature of Sch210972 is the tetramic acid motif proposed to be derived from the non-proteinogenic amino acid HMG, by a Dieckmann-type condensation catalyzed by the reductase domain of cghG. The aldolase cghB catalyzes the aldol condensation of 2 molecules of pyruvic acid to yield the intermediate 4-hydroxyl-4-methyl-2-oxoglutarate (HMOG), which can then be stereoselectively transaminated by an unidentified enzyme to form HMG. The Diels-Alderase cghA then uses the Dieckmann product released by cghG as substrate and catalyzes the Diels-Alder cycloaddition to form the decalin ring of Sch210972. CghA also suppresses the nonenzymatic formation of the alternative stereoisomer. This Chaetomium globosum (strain ATCC 6205 / CBS 148.51 / DSM 1962 / NBRC 6347 / NRRL 1970) (Soil fungus) protein is Sch210972 biosynthesis cluster protein E.